The sequence spans 289 residues: Glucanase inhibitor protein 2 (289 aa).

Residues 1 to 19 (MKVTATIAAASMAIAAASA) form the signal peptide. One can recognise a Peptidase S1 domain in the interval 29–257 (ILGGSIIPSG…ALKWVNPIIK (229 aa)). C56 and C72 are joined by a disulfide. N-linked (GlcNAc...) asparagine glycans are attached at residues N89, N104, and N109. 2 disulfides stabilise this stretch: C180-C192 and C202-C233.

The protein belongs to the peptidase S1 family.

Its subcellular location is the secreted. Functionally, secreted effector that suppresses host plant glucan elicitor-mediated defense responses. Targets host endoglucanases and inhibits the endoglucanase-mediated release of elicitor-active glucan oligosaccharides from P.sojae cell walls. The polypeptide is Glucanase inhibitor protein 2 (Phytophthora sojae (Soybean stem and root rot agent)).